Consider the following 757-residue polypeptide: MDVNPTLLFLKVPAQNAISTTFPYTGDPPYSHGTGTGYTMDTVNRTHQYSEKGKWTTNTETGAPQLNPIDGPLPEDNEPSGYAQTDCVLEAMAFLEESHPGIFENSCLETMEIVQQTRVDKLTQGRQTYDWTLNRNQPAATALANTIEVFRSNGLTANESGRLIDFLKDVVESMDKKEMEITTHFQRKRRVRDNMTKKMVTQRTIGKKKQRLNKKSYLIRALTLNTMTKDAERGKLKRRAIATPGMQIRGFVYFVETLARSICEKLEQSGLPVGGNEKKAKLANVVRKMMTNSQDTELSFTITGDNTKWNENQNPRMFLAMITYITRNQPEWFRNVLSIAPIMFSNKMARLGKGYMFESKSMKLRTQIPAEMLASIDLKYFNESTRKKIEKIRPLLIDGTASLSPGMMMGMFNMLSTVLGVSILNLGQKRYTKTTYWWDGLQSSDDFALIVNAPNHEGIQAGVDRFYRTCKLVGINMSKKKSYINRTGTFEFTSFFYRYGFVANFSMELPSFGVSGINESADMSIGVTVIKNNMINNDLGPATAQMALQLFIKDYRYTYRCHRGDTQIQTRRSFELKKLWEQTRSKAGLLVSDGGPNLYNIRNLHIPEVCLKWELMDEDYQGRLCNPLNPFVSHKEIESVNNAVVMPAHGPAKSMEYDAVATTHSWIPKRNRSILNTSQRGILEDEQMYQKCCNLFEKFFPSSSYRRPVGISSMVEAMVSRARIDARIDFESGRIKKEEFAEIMKICSTIEELRRQK.

Residues 50–82 (SEKGKWTTNTETGAPQLNPIDGPLPEDNEPSGY) form a disordered region. The span at 55–64 (WTTNTETGAP) shows a compositional bias: polar residues. Short sequence motifs (nuclear localization signal) lie at residues 187–195 (RKRRVRDNM) and 203–216 (RTIG…NKKS). The promoter-binding site stretch occupies residues 249–256 (RGFVYFVE). The 198-residue stretch at 286–483 (VRKMMTNSQD…GINMSKKKSY (198 aa)) folds into the RdRp catalytic domain.

Belongs to the influenza viruses polymerase PB1 family. As to quaternary structure, influenza RNA polymerase is composed of three subunits: PB1, PB2 and PA. Interacts (via N-terminus) with PA (via C-terminus). Interacts (via C-terminus) with PB2 (via N-terminus); this interaction is essential for transcription initiation. Phosphorylated by host PRKCA.

It localises to the host nucleus. The protein resides in the host cytoplasm. It carries out the reaction RNA(n) + a ribonucleoside 5'-triphosphate = RNA(n+1) + diphosphate. RNA-dependent RNA polymerase which is responsible for replication and transcription of virus RNA segments. The transcription of viral mRNAs occurs by a unique mechanism called cap-snatching. 5' methylated caps of cellular mRNAs are cleaved after 10-13 nucleotides by PA. In turn, these short capped RNAs are used as primers by PB1 for transcription of viral mRNAs. During virus replication, PB1 initiates RNA synthesis and copy vRNA into complementary RNA (cRNA) which in turn serves as a template for the production of more vRNAs. This chain is RNA-directed RNA polymerase catalytic subunit, found in Influenza A virus (strain A/Grey teal/Australia/2/1979 H4N4).